The following is a 220-amino-acid chain: Large ribosomal subunit protein uL3 (220 aa).

The tract at residues 113 to 143 (GTTKGHGYQGNIHKDGQRRGPMAHGSRYHRR) is disordered.

It belongs to the universal ribosomal protein uL3 family. Part of the 50S ribosomal subunit. Forms a cluster with proteins L14 and L19.

One of the primary rRNA binding proteins, it binds directly near the 3'-end of the 23S rRNA, where it nucleates assembly of the 50S subunit. In Limosilactobacillus fermentum (strain NBRC 3956 / LMG 18251) (Lactobacillus fermentum), this protein is Large ribosomal subunit protein uL3.